A 410-amino-acid chain; its full sequence is Arginine deiminase (410 aa).

The active-site Amidino-cysteine intermediate is Cys399.

The protein belongs to the arginine deiminase family.

The protein localises to the cytoplasm. It catalyses the reaction L-arginine + H2O = L-citrulline + NH4(+). It participates in amino-acid degradation; L-arginine degradation via ADI pathway; carbamoyl phosphate from L-arginine: step 1/2. The chain is Arginine deiminase from Listeria monocytogenes serovar 1/2a (strain ATCC BAA-679 / EGD-e).